Here is a 70-residue protein sequence, read N- to C-terminus: Small ribosomal subunit protein bS21A (70 aa).

This sequence belongs to the bacterial ribosomal protein bS21 family.

The chain is Small ribosomal subunit protein bS21A from Burkholderia orbicola (strain AU 1054).